Here is a 389-residue protein sequence, read N- to C-terminus: Phospho-N-acetylmuramoyl-pentapeptide-transferase (389 aa).

Transmembrane regions (helical) follow at residues 25–45 (RAVMATITALLIGLVCGPAVI), 73–93 (TMGGVLILLGIAVATLLWADL), 97–117 (FIWIVMLVTFGFGVIGWVDDY), 135–155 (FWQSVIGLFAAVYLAFSVSEA), 190–210 (ISYPLGVWGFIVLTYLVIVGA), 222–242 (GLVIMPVVLVGASLGVFAYVM), 259–279 (AGELLIFCSAMGGAGLAFLWF), 287–307 (FMGDVGALALGGALGTVAVIV), 311–331 (IVLFIMGGIFVAETLSVMLQV), and 366–386 (QVVVRFWIITLMLCLFGLSTL).

This sequence belongs to the glycosyltransferase 4 family. MraY subfamily. Mg(2+) serves as cofactor.

Its subcellular location is the cell inner membrane. It carries out the reaction UDP-N-acetyl-alpha-D-muramoyl-L-alanyl-gamma-D-glutamyl-meso-2,6-diaminopimeloyl-D-alanyl-D-alanine + di-trans,octa-cis-undecaprenyl phosphate = di-trans,octa-cis-undecaprenyl diphospho-N-acetyl-alpha-D-muramoyl-L-alanyl-D-glutamyl-meso-2,6-diaminopimeloyl-D-alanyl-D-alanine + UMP. It functions in the pathway cell wall biogenesis; peptidoglycan biosynthesis. Catalyzes the initial step of the lipid cycle reactions in the biosynthesis of the cell wall peptidoglycan: transfers peptidoglycan precursor phospho-MurNAc-pentapeptide from UDP-MurNAc-pentapeptide onto the lipid carrier undecaprenyl phosphate, yielding undecaprenyl-pyrophosphoryl-MurNAc-pentapeptide, known as lipid I. The protein is Phospho-N-acetylmuramoyl-pentapeptide-transferase of Paraburkholderia xenovorans (strain LB400).